The following is a 410-amino-acid chain: Phosphoglycerate kinase (410 aa).

Substrate is bound by residues 19–21, Arg-34, 57–60, Arg-114, and Arg-154; these read DLN and HQGK. Residues Glu-332 and 358-361 each bind ATP; that span reads GGHS.

This sequence belongs to the phosphoglycerate kinase family. As to quaternary structure, homodimer.

The protein resides in the cytoplasm. The enzyme catalyses (2R)-3-phosphoglycerate + ATP = (2R)-3-phospho-glyceroyl phosphate + ADP. The protein operates within carbohydrate degradation; glycolysis; pyruvate from D-glyceraldehyde 3-phosphate: step 2/5. This chain is Phosphoglycerate kinase (pgk), found in Pyrococcus horikoshii (strain ATCC 700860 / DSM 12428 / JCM 9974 / NBRC 100139 / OT-3).